The chain runs to 255 residues: Shieldin complex subunit 3 (255 aa).

The sufficient for interaction with MAD2L2 stretch occupies residues 33-88 (QDFPTHPLPRFIPWFPYDESKLPLKPERLPPVISEEAAESVKQYLAISEPGVKSQS). Positions 116 to 135 (QTNAAHLDKNSGKEKQHKQR) are disordered.

In terms of assembly, component of the shieldin complex, consisting of SHLD1, SHLD2, SHLD3 and MAD2L2/REV7. Within the complex, SHLD2 forms a scaffold which interacts with a SHLD3-MAD2L2 subcomplex via its N-terminus, and with SHLD1 via its C-terminus. Interacts with ASTE1.

Its subcellular location is the chromosome. Its function is as follows. Component of the shieldin complex, which plays an important role in repair of DNA double-stranded breaks (DSBs). During G1 and S phase of the cell cycle, the complex functions downstream of TP53BP1 to promote non-homologous end joining (NHEJ) and suppress DNA end resection. Mediates various NHEJ-dependent processes including immunoglobulin class-switch recombination, and fusion of unprotected telomeres. The sequence is that of Shieldin complex subunit 3 from Mus musculus (Mouse).